Here is a 323-residue protein sequence, read N- to C-terminus: Cell division protein ZipA (323 aa).

Topologically, residues 1 to 4 are periplasmic; the sequence is MDLN. Residues 5-25 form a helical membrane-spanning segment; it reads TILIILGIIALIILVVHGLWA. The Cytoplasmic portion of the chain corresponds to 26–323; the sequence is NRREKSQYFK…AEKAYLDKVR (298 aa). The interval 44–73 is disordered; it reads SRLREPPAHIQSASEEKKDANTSTPTAEVS.

The protein belongs to the ZipA family. As to quaternary structure, interacts with FtsZ via their C-terminal domains.

The protein resides in the cell inner membrane. Essential cell division protein that stabilizes the FtsZ protofilaments by cross-linking them and that serves as a cytoplasmic membrane anchor for the Z ring. Also required for the recruitment to the septal ring of downstream cell division proteins. This is Cell division protein ZipA from Pasteurella multocida (strain Pm70).